The chain runs to 83 residues: Mu-theraphotoxin-Hhn2f (83 aa).

Residues 1–21 (MKASMFLALAGLVLLFVVGYA) form the signal peptide. The propeptide occupies 22–48 (SESEEKEFPIELLSKIFAVDVFKGEER). 3 disulfide bridges follow: C50-C65, C57-C70, and C64-C77. The residue at position 81 (L81) is a Leucine amide.

It belongs to the neurotoxin 10 (Hwtx-1) family. 15 (Hntx-3) subfamily. As to quaternary structure, monomer. In terms of tissue distribution, expressed by the venom gland.

The protein localises to the secreted. In terms of biological role, lethal neurotoxin. Selectively blocks tetrodotoxin-sensitive voltage-gated sodium channels (Nav). Does not affect tetrodotoxin-resistant voltage-gated sodium channels or calcium channels. This Cyriopagopus hainanus (Chinese bird spider) protein is Mu-theraphotoxin-Hhn2f.